Consider the following 164-residue polypeptide: Phosphopantetheine adenylyltransferase (164 aa).

Substrate is bound at residue Ser-9. ATP is bound by residues Ser-9–Phe-10 and His-17. The substrate site is built by Lys-41, Val-78, and Arg-92. ATP contacts are provided by residues Gly-93–Arg-95, Glu-103, and Ser-128–Thr-134.

This sequence belongs to the bacterial CoaD family. As to quaternary structure, homohexamer. Mg(2+) serves as cofactor.

The protein resides in the cytoplasm. The enzyme catalyses (R)-4'-phosphopantetheine + ATP + H(+) = 3'-dephospho-CoA + diphosphate. It functions in the pathway cofactor biosynthesis; coenzyme A biosynthesis; CoA from (R)-pantothenate: step 4/5. Its function is as follows. Reversibly transfers an adenylyl group from ATP to 4'-phosphopantetheine, yielding dephospho-CoA (dPCoA) and pyrophosphate. This chain is Phosphopantetheine adenylyltransferase, found in Sinorhizobium fredii (strain NBRC 101917 / NGR234).